A 362-amino-acid chain; its full sequence is Uroporphyrinogen decarboxylase (362 aa).

Substrate is bound by residues 39–43 (RQAGR), D88, Y165, T220, and H334.

The protein belongs to the uroporphyrinogen decarboxylase family. In terms of assembly, homodimer.

Its subcellular location is the cytoplasm. It catalyses the reaction uroporphyrinogen III + 4 H(+) = coproporphyrinogen III + 4 CO2. It participates in porphyrin-containing compound metabolism; protoporphyrin-IX biosynthesis; coproporphyrinogen-III from 5-aminolevulinate: step 4/4. In terms of biological role, catalyzes the decarboxylation of four acetate groups of uroporphyrinogen-III to yield coproporphyrinogen-III. This is Uroporphyrinogen decarboxylase from Synechococcus sp. (strain JA-3-3Ab) (Cyanobacteria bacterium Yellowstone A-Prime).